We begin with the raw amino-acid sequence, 169 residues long: MICOS complex subunit MIC19 (169 aa).

Gly-2 carries N-myristoyl glycine lipidation. Residues Glu-123–Val-165 form the CHCH domain. Short sequence motifs (cx9C motif) lie at residues Cys-126–Cys-136 and Cys-147–Cys-157. 2 disulfides stabilise this stretch: Cys-126–Cys-157 and Cys-136–Cys-147.

This sequence belongs to the MICOS complex subunit Mic19 family. Metazoan Mic19 subfamily. Component of the mitochondrial contact site and cristae organizing system (MICOS) complex.

It localises to the mitochondrion inner membrane. Functionally, plays a role in maintaining mitochondrial morphology. May act as a component of the MICOS complex, a large protein complex of the mitochondria. In Caenorhabditis elegans, this protein is MICOS complex subunit MIC19.